Consider the following 65-residue polypeptide: White colony protein WHS11 (65 aa).

Positions 1 to 17 (MSDLGRKDIGDKIESKL) are enriched in basic and acidic residues. The interval 1 to 32 (MSDLGRKDIGDKIESKLTPDSQKSTPEQFKDK) is disordered. Over residues 18–27 (TPDSQKSTPE) the composition is skewed to polar residues.

It to yeast HSP12/GLP1 and S.pombe hsp9.

This Candida albicans (strain WO-1) (Yeast) protein is White colony protein WHS11 (WHS11).